Here is a 318-residue protein sequence, read N- to C-terminus: Ribose-phosphate pyrophosphokinase (318 aa).

ATP is bound by residues 46–48 (DGE) and 105–106 (RQ). Mg(2+) contacts are provided by His-139 and Asp-178. The active site involves Lys-201. Residues Arg-203, Asp-227, and 231 to 235 (DTAGT) contribute to the D-ribose 5-phosphate site.

It belongs to the ribose-phosphate pyrophosphokinase family. Class I subfamily. Homohexamer. Mg(2+) is required as a cofactor.

The protein localises to the cytoplasm. The catalysed reaction is D-ribose 5-phosphate + ATP = 5-phospho-alpha-D-ribose 1-diphosphate + AMP + H(+). It functions in the pathway metabolic intermediate biosynthesis; 5-phospho-alpha-D-ribose 1-diphosphate biosynthesis; 5-phospho-alpha-D-ribose 1-diphosphate from D-ribose 5-phosphate (route I): step 1/1. In terms of biological role, involved in the biosynthesis of the central metabolite phospho-alpha-D-ribosyl-1-pyrophosphate (PRPP) via the transfer of pyrophosphoryl group from ATP to 1-hydroxyl of ribose-5-phosphate (Rib-5-P). This Helicobacter pylori (strain ATCC 700392 / 26695) (Campylobacter pylori) protein is Ribose-phosphate pyrophosphokinase.